A 55-amino-acid chain; its full sequence is Rubredoxin-1 (55 aa).

The 54-residue stretch at 1–54 (MKKWQCVVCGLIYDEAKGWPEEGIEAGTRWEDVPEDWLCPDCGVGKLDFEMIEI) folds into the Rubredoxin-like domain. Residues cysteine 6, cysteine 9, cysteine 39, and cysteine 42 each contribute to the Fe cation site.

It belongs to the rubredoxin family. Fe(3+) is required as a cofactor.

Its subcellular location is the cytoplasm. The protein operates within hydrocarbon metabolism; alkane degradation. Its function is as follows. Involved in the hydrocarbon hydroxylating system, which transfers electrons from NADH to rubredoxin reductase and then through rubredoxin to alkane 1 monooxygenase. The chain is Rubredoxin-1 (rubA1) from Pseudomonas aeruginosa (strain ATCC 15692 / DSM 22644 / CIP 104116 / JCM 14847 / LMG 12228 / 1C / PRS 101 / PAO1).